A 259-amino-acid polypeptide reads, in one-letter code: 3-hydroxypropionyl-coenzyme A dehydratase (259 aa).

The active-site Nucleophile is the E113. The active-site Proton acceptor is E133.

This sequence belongs to the enoyl-CoA hydratase/isomerase family. In terms of assembly, monomer.

The catalysed reaction is 3-hydroxypropanoyl-CoA = acryloyl-CoA + H2O. Its function is as follows. Plays a role in autotrophic carbon fixation via the 3-hydroxypropionate/4-hydroxybutyrate cycle. Catalyzes the reversible dehydration of 3-hydroxypropionyl-CoA to form acryloyl-CoA, and the reversible dehydration of (S)-3-hydroxybutyryl-CoA to form crotonyl-CoA. Inactive towards (R)-3-hydroxybutyryl-CoA. This is 3-hydroxypropionyl-coenzyme A dehydratase from Metallosphaera sedula (strain ATCC 51363 / DSM 5348 / JCM 9185 / NBRC 15509 / TH2).